The primary structure comprises 273 residues: Tyrosinase (273 aa).

Histidine 38, histidine 54, histidine 63, histidine 190, histidine 194, and histidine 216 together coordinate Cu cation.

It belongs to the tyrosinase family. The cofactor is Cu(2+).

The enzyme catalyses 2 L-dopa + O2 = 2 L-dopaquinone + 2 H2O. The catalysed reaction is L-tyrosine + O2 = L-dopaquinone + H2O. Functionally, this is a copper-containing oxidase that functions in the formation of pigments such as melanins and other polyphenolic compounds. This Streptomyces antibioticus protein is Tyrosinase (melC2).